The primary structure comprises 439 residues: Ribosomal protein uS12 methylthiotransferase RimO (439 aa).

One can recognise an MTTase N-terminal domain in the interval 5–117 (KKLHLISLGC…IDELIASKQS (113 aa)). 6 residues coordinate [4Fe-4S] cluster: Cys14, Cys48, Cys80, Cys149, Cys153, and Cys156. The 229-residue stretch at 135–363 (TGSNYHAYIK…GEIAERSTLR (229 aa)) folds into the Radical SAM core domain. In terms of domain architecture, TRAM spans 366–437 (EKMVGKTVEL…GMQLLATLIK (72 aa)).

It belongs to the methylthiotransferase family. RimO subfamily. [4Fe-4S] cluster serves as cofactor.

Its subcellular location is the cytoplasm. It catalyses the reaction L-aspartate(89)-[ribosomal protein uS12]-hydrogen + (sulfur carrier)-SH + AH2 + 2 S-adenosyl-L-methionine = 3-methylsulfanyl-L-aspartate(89)-[ribosomal protein uS12]-hydrogen + (sulfur carrier)-H + 5'-deoxyadenosine + L-methionine + A + S-adenosyl-L-homocysteine + 2 H(+). Catalyzes the methylthiolation of an aspartic acid residue of ribosomal protein uS12. This is Ribosomal protein uS12 methylthiotransferase RimO from Sulfurovum sp. (strain NBC37-1).